The sequence spans 280 residues: Four and a half LIM domains protein 1 (280 aa).

Ser-2 carries the N-acetylserine modification. An N6-acetyllysine modification is found at Lys-4. The segment at 7–31 (CHYCRDPLQGKKYVQKDGRHCCLKC) adopts a C4-type zinc-finger fold. 4 consecutive LIM zinc-binding domains span residues 40 to 92 (CVEC…CNKC), 101 to 153 (CKGC…CVTC), 162 to 212 (CVKC…CVDC), and 221 to 276 (CAGC…CPDC). A Glycyl lysine isopeptide (Lys-Gly) (interchain with G-Cter in SUMO2) cross-link involves residue Lys-86.

It is found in the cytoplasm. May have an involvement in muscle development or hypertrophy. Isoform 2 binds to RBP-J and plays a negative regulatory role in the RBP-J-mediated transcription in mammalian systems. The polypeptide is Four and a half LIM domains protein 1 (Fhl1) (Rattus norvegicus (Rat)).